A 293-amino-acid polypeptide reads, in one-letter code: Mimecan (293 aa).

Residues 1–19 form the signal peptide; that stretch reads MKTLQATFFLVAFVPLVKP. A glycan (N-linked (GlcNAc...) asparagine) is linked at Asn-60. 7 LRR repeats span residues 107 to 126, 127 to 150, 151 to 174, 175 to 194, 195 to 220, 221 to 241, and 242 to 272; these read EAVP…FNKI, KRIA…GNMI, EEIE…ENRL, VKLP…QNRI, KSRG…HNAL, ESVP…HNNI, and TTIT…GNPI. Asn-240 and Asn-253 each carry an N-linked (GlcNAc...) asparagine glycan. A disulfide bond links Cys-250 and Cys-283.

This sequence belongs to the small leucine-rich proteoglycan (SLRP) family. SLRP class III subfamily. Post-translationally, contains keratan sulfate. As to expression, expressed in many tissues.

Its subcellular location is the secreted. The protein resides in the extracellular space. It localises to the extracellular matrix. In terms of biological role, induces bone formation in conjunction with TGF-beta-1 or TGF-beta-2. In Coturnix japonica (Japanese quail), this protein is Mimecan (OGN).